The primary structure comprises 473 residues: FAD-dependent monooxygenase ctvC (473 aa).

FAD is bound by residues Glu-37, Ala-51, and Arg-110. Residues 218–238 (IGPGFTFLIFPAAGDSLFWVL) form a helical membrane-spanning segment. FAD is bound by residues Asp-310 and Ala-323. Asn-358 carries an N-linked (GlcNAc...) asparagine glycan. A helical transmembrane segment spans residues 451–471 (LVYCFGVVILLWISWAVFNVN).

It belongs to the paxM FAD-dependent monooxygenase family. It depends on FAD as a cofactor.

The protein localises to the membrane. It functions in the pathway mycotoxin biosynthesis. Its function is as follows. FAD-dependent monooxygenase; part of the gene cluster that mediates the biosynthesis of citreoviridin, an inhibitor of the of F1-ATPase beta-subunit. The HR-PKS ctvA accepts acetyl-CoA as the starter unit and catalyzes eight iterations of malonyl-CoA extension and four iterations of SAM-dependent methylation at C4, C12, C14, and C16. The KR and DH domains selectively act on the first six iterations to generate the hexaene chain. In the last three iterations, the KR and DH domains terminate their functions to yield a beta,delta-diketo ester moiety, which then undergoes intramolecular cyclization to yield an alpha-pyrone intermediate. Subsequently, ctvB methylates the alpha-pyrone hydroxyl group to generate citreomontanin. In order to form the tetrahydrofuran ring with the correct stereochemistry, the terminal alkenes of citreomontanin need to undergo isomerization to yield a (17Z)-hexaene, a step that could be catalyzed by ctvC. The (17Z)-hexaene then undergoes bisepoxidation by ctvC to form a (17R,16R,15S,14R)-bisepoxide moiety. Lastly, ctvD acts as a regioselective hydrolase to form the tetrahydrofuran ring with the substituents in the correct absolute configuration, completing the biosynthesis of citreoviridin. The polypeptide is FAD-dependent monooxygenase ctvC (Aspergillus terreus (strain NIH 2624 / FGSC A1156)).